The primary structure comprises 63 residues: Putative antitoxin AF_1084 (63 aa).

Belongs to the UPF0165 family.

Possibly the antitoxin component of a type II toxin-antitoxin (TA) system. The sequence is that of Putative antitoxin AF_1084 from Archaeoglobus fulgidus (strain ATCC 49558 / DSM 4304 / JCM 9628 / NBRC 100126 / VC-16).